The sequence spans 398 residues: S-adenosylmethionine synthase (398 aa).

His-16 serves as a coordination point for ATP. Asp-18 contributes to the Mg(2+) binding site. Glu-44 is a binding site for K(+). L-methionine is bound by residues Glu-57 and Gln-100. Positions 100 to 110 (QSPDIAQGVNE) are flexible loop. Residues 175-177 (DAK), 242-243 (RF), Asp-251, 257-258 (RK), Ala-274, and Lys-278 each bind ATP. Position 251 (Asp-251) interacts with L-methionine. L-methionine is bound at residue Lys-282.

The protein belongs to the AdoMet synthase family. Homotetramer; dimer of dimers. Requires Mg(2+) as cofactor. The cofactor is K(+).

The protein resides in the cytoplasm. The catalysed reaction is L-methionine + ATP + H2O = S-adenosyl-L-methionine + phosphate + diphosphate. The protein operates within amino-acid biosynthesis; S-adenosyl-L-methionine biosynthesis; S-adenosyl-L-methionine from L-methionine: step 1/1. Catalyzes the formation of S-adenosylmethionine (AdoMet) from methionine and ATP. The overall synthetic reaction is composed of two sequential steps, AdoMet formation and the subsequent tripolyphosphate hydrolysis which occurs prior to release of AdoMet from the enzyme. The sequence is that of S-adenosylmethionine synthase from Streptococcus agalactiae serotype III (strain NEM316).